A 361-amino-acid chain; its full sequence is Peptide chain release factor 1 (361 aa).

Gln235 is subject to N5-methylglutamine. Residues 283–306 (RSQQATAEAMTRKLQVGSGDRSQR) are disordered.

The protein belongs to the prokaryotic/mitochondrial release factor family. Methylated by PrmC. Methylation increases the termination efficiency of RF1.

The protein resides in the cytoplasm. In terms of biological role, peptide chain release factor 1 directs the termination of translation in response to the peptide chain termination codons UAG and UAA. The sequence is that of Peptide chain release factor 1 from Xylella fastidiosa (strain M23).